We begin with the raw amino-acid sequence, 179 residues long: NADH-quinone oxidoreductase subunit B (179 aa).

4 residues coordinate [4Fe-4S] cluster: Cys-35, Cys-36, Cys-100, and Cys-129.

The protein belongs to the complex I 20 kDa subunit family. As to quaternary structure, NDH-1 is composed of 14 different subunits. Subunits NuoB, C, D, E, F, and G constitute the peripheral sector of the complex. It depends on [4Fe-4S] cluster as a cofactor.

Its subcellular location is the cell inner membrane. It carries out the reaction a quinone + NADH + 5 H(+)(in) = a quinol + NAD(+) + 4 H(+)(out). In terms of biological role, NDH-1 shuttles electrons from NADH, via FMN and iron-sulfur (Fe-S) centers, to quinones in the respiratory chain. Couples the redox reaction to proton translocation (for every two electrons transferred, four hydrogen ions are translocated across the cytoplasmic membrane), and thus conserves the redox energy in a proton gradient. This is NADH-quinone oxidoreductase subunit B from Aquifex aeolicus (strain VF5).